The following is a 261-amino-acid chain: Guanine nucleotide exchange factor BopE (261 aa).

It belongs to the GEF (guanine exchange factor) SopE family. In terms of assembly, monomer. Interacts with human CDC42.

The protein resides in the secreted. In terms of biological role, activator for both CDC42 and RAC1 by directly interacting with these Rho GTPases and acting as a guanine nucleotide exchange factor (GEF). This activation results in actin cytoskeleton rearrangements and stimulates membrane ruffling, thus promoting bacterial entry into non-phagocytic cells. The chain is Guanine nucleotide exchange factor BopE (bopE) from Burkholderia pseudomallei (strain 1710b).